Reading from the N-terminus, the 86-residue chain is High affinity immunoglobulin epsilon receptor subunit gamma (86 aa).

The first 18 residues, 1 to 18, serve as a signal peptide directing secretion; it reads MIPAVILFLLLLVEEAAA. At 19 to 23 the chain is on the extracellular side; sequence LGEPQ. A helical transmembrane segment spans residues 24 to 44; the sequence is LCYILDAILFLYGIVLTLLYC. Over 45–86 the chain is Cytoplasmic; it reads RLKIQVRKADIASREKSDAVYTGLNTRNQETYETLKHEKPPQ. Positions 54 to 82 constitute an ITAM domain; sequence DIASREKSDAVYTGLNTRNQETYETLKHE. Phosphotyrosine occurs at positions 65 and 76. Threonine 78 carries the phosphothreonine modification.

Belongs to the CD3Z/FCER1G family. As to quaternary structure, igE Fc receptor is a tetramer of an alpha chain, a beta chain, and two disulfide linked gamma chains. Associates with FCGR1A to form a functional receptor complex. The signaling subunit of immunoglobulin gamma (IgG) Fc receptor complex. As a homodimer or a heterodimer of CD247 and FCER1G, associates with the ligand binding subunit FCGR3A to form a functional receptor complex. Associates with CLEC6A. Interacts with CLEC4E. Interacts (via ITAM domain) with SYK (via SH2 domains); activates SYK, enabling integrin-mediated activation of neutrophils and macrophages. Interacts with common beta chain of interleukin 3 receptor CSF2RB and recruits SYK in response to IL3 stimulation; this interaction is direct. Interacts with CD300LH; the interaction may be indirect. Interacts with CD300LD. Interacts with TARM1. In terms of tissue distribution, expressed in leukocytes and pinealocytes. Expression in the pineal gland does not undergo circadian variations.

The protein resides in the cell membrane. Adapter protein containing an immunoreceptor tyrosine-based activation motif (ITAM) that transduces activation signals from various immunoreceptors. As a component of the high-affinity immunoglobulin E (IgE) receptor, mediates allergic inflammatory signaling in mast cells. As a constitutive component of interleukin-3 receptor complex, selectively mediates interleukin 4/IL4 production by basophils priming T-cells toward effector T-helper 2 subset. Associates with pattern recognition receptors CLEC4D and CLEC4E to form a functional signaling complex in myeloid cells. Binding of mycobacterial trehalose 6,6'-dimycolate (TDM) to this receptor complex leads to phosphorylation of ITAM, triggering activation of SYK, CARD9 and NF-kappa-B, consequently driving maturation of antigen-presenting cells and shaping antigen-specific priming of T-cells toward effector T-helper 1 and T-helper 17 cell subtypes. May function cooperatively with other activating receptors. Functionally linked to integrin beta-2/ITGB2-mediated neutrophil activation. Also involved in integrin alpha-2/ITGA2-mediated platelet activation. The sequence is that of High affinity immunoglobulin epsilon receptor subunit gamma (Fcer1g) from Rattus norvegicus (Rat).